Reading from the N-terminus, the 324-residue chain is Malate dehydrogenase (324 aa).

NAD(+) is bound by residues 21–26 and D45; that span reads GAGRVG. Substrate is bound by residues R94 and R100. NAD(+) contacts are provided by residues N107 and 130 to 132; that span reads VTN. Substrate-binding residues include N132 and R163. H187 (proton acceptor) is an active-site residue.

It belongs to the LDH/MDH superfamily. MDH type 3 family.

The catalysed reaction is (S)-malate + NAD(+) = oxaloacetate + NADH + H(+). Catalyzes the reversible oxidation of malate to oxaloacetate. This Trichormus variabilis (strain ATCC 29413 / PCC 7937) (Anabaena variabilis) protein is Malate dehydrogenase.